The following is a 261-amino-acid chain: Cytochrome c oxidase subunit 3 (261 aa).

Residues M1 to P15 lie on the Mitochondrial matrix side of the membrane. A helical membrane pass occupies residues W16–W34. The Mitochondrial intermembrane segment spans residues F35–T40. The helical transmembrane segment at I41–T66 threads the bilayer. Topologically, residues F67–T72 are mitochondrial matrix. Residues P73–S105 traverse the membrane as a helical segment. Residues L106–E128 are Mitochondrial intermembrane-facing. A helical transmembrane segment spans residues V129–M152. Topologically, residues E153–N155 are mitochondrial matrix. The chain crosses the membrane as a helical span at residues R156–E183. Residues A184–D190 are Mitochondrial intermembrane-facing. The helical transmembrane segment at G191–L223 threads the bilayer. The Mitochondrial matrix portion of the chain corresponds to K224–H232. A helical membrane pass occupies residues F233–I256. Residues Y257 to S261 are Mitochondrial intermembrane-facing.

This sequence belongs to the cytochrome c oxidase subunit 3 family. As to quaternary structure, component of the cytochrome c oxidase (complex IV, CIV), a multisubunit enzyme composed of 14 subunits. The complex is composed of a catalytic core of 3 subunits MT-CO1, MT-CO2 and MT-CO3, encoded in the mitochondrial DNA, and 11 supernumerary subunits COX4I, COX5A, COX5B, COX6A, COX6B, COX6C, COX7A, COX7B, COX7C, COX8 and NDUFA4, which are encoded in the nuclear genome. The complex exists as a monomer or a dimer and forms supercomplexes (SCs) in the inner mitochondrial membrane with NADH-ubiquinone oxidoreductase (complex I, CI) and ubiquinol-cytochrome c oxidoreductase (cytochrome b-c1 complex, complex III, CIII), resulting in different assemblies (supercomplex SCI(1)III(2)IV(1) and megacomplex MCI(2)III(2)IV(2)).

The protein localises to the mitochondrion inner membrane. The catalysed reaction is 4 Fe(II)-[cytochrome c] + O2 + 8 H(+)(in) = 4 Fe(III)-[cytochrome c] + 2 H2O + 4 H(+)(out). In terms of biological role, component of the cytochrome c oxidase, the last enzyme in the mitochondrial electron transport chain which drives oxidative phosphorylation. The respiratory chain contains 3 multisubunit complexes succinate dehydrogenase (complex II, CII), ubiquinol-cytochrome c oxidoreductase (cytochrome b-c1 complex, complex III, CIII) and cytochrome c oxidase (complex IV, CIV), that cooperate to transfer electrons derived from NADH and succinate to molecular oxygen, creating an electrochemical gradient over the inner membrane that drives transmembrane transport and the ATP synthase. Cytochrome c oxidase is the component of the respiratory chain that catalyzes the reduction of oxygen to water. Electrons originating from reduced cytochrome c in the intermembrane space (IMS) are transferred via the dinuclear copper A center (CU(A)) of subunit 2 and heme A of subunit 1 to the active site in subunit 1, a binuclear center (BNC) formed by heme A3 and copper B (CU(B)). The BNC reduces molecular oxygen to 2 water molecules using 4 electrons from cytochrome c in the IMS and 4 protons from the mitochondrial matrix. This is Cytochrome c oxidase subunit 3 (MT-CO3) from Raphicerus melanotis (Cape grysbok).